Reading from the N-terminus, the 388-residue chain is Nuclear hormone receptor family member nhr-16 (388 aa).

The segment at residues 11-86 (FLKCAICQES…VGMNPAGVQQ (76 aa)) is a DNA-binding region (nuclear receptor). 2 NR C4-type zinc fingers span residues 14–34 (CAIC…CRAC) and 50–74 (CQGN…YIKC). The 273-residue stretch at 115 to 387 (PPSSLMLHIP…DEFYNLMSGR (273 aa)) folds into the NR LBD domain.

This sequence belongs to the nuclear hormone receptor family.

The protein resides in the nucleus. Its function is as follows. Orphan nuclear receptor. This Caenorhabditis elegans protein is Nuclear hormone receptor family member nhr-16 (nhr-16).